The sequence spans 332 residues: NAD-dependent protein deacetylase hst2 (332 aa).

Residues 7 to 269 (KHVDSSKHLE…RALCKLLGWS (263 aa)) enclose the Deacetylase sirtuin-type domain. Residues 35–55 (GAGISTAAGIPDFRSPETGIY) and 118–121 (QNID) contribute to the NAD(+) site. The Proton acceptor role is filled by H138. The Zn(2+) site is built by C146, C149, C170, and C173. Residues 210 to 212 (GTS), 235 to 237 (NRE), and C255 contribute to the NAD(+) site.

It belongs to the sirtuin family. Class I subfamily. Zn(2+) is required as a cofactor.

It localises to the cytoplasm. The protein resides in the nucleus. The catalysed reaction is N(6)-acetyl-L-lysyl-[protein] + NAD(+) + H2O = 2''-O-acetyl-ADP-D-ribose + nicotinamide + L-lysyl-[protein]. Its function is as follows. NAD-dependent histone deacetylase, which could function in telomeric silencing, cell cycle progression and chromosome stability. The sequence is that of NAD-dependent protein deacetylase hst2 (hst2) from Schizosaccharomyces pombe (strain 972 / ATCC 24843) (Fission yeast).